The following is a 333-amino-acid chain: Abequosyltransferase RfbV (333 aa).

Belongs to the glycosyltransferase 2 family.

It catalyses the reaction CDP-alpha-D-abequose + alpha-D-Man-(1-&gt;4)-alpha-L-Rha-(1-&gt;3)-alpha-D-Gal-di-trans,octa-cis-undecaprenyl diphosphate = alpha-D-Abe-(1-&gt;3)-alpha-D-Man-(1-&gt;4)-alpha-L-Rha-(1-&gt;3)-alpha-D-Gal-di-trans,octa-cis-undecaprenyl diphosphate + CDP + H(+). Its pathway is bacterial outer membrane biogenesis; LPS O-antigen biosynthesis. Catalyzes the transfer of CDP-abequose on D-mannosyl-L-rhamnosyl-D-galactose-1-diphospholipid to yield D-abequosyl-D-mannosyl-rhamnosyl-D-galactose-1-diphospholipid. In Salmonella typhimurium (strain LT2 / SGSC1412 / ATCC 700720), this protein is Abequosyltransferase RfbV (rfbV).